The sequence spans 272 residues: SWIRM domain-containing protein laf2 (272 aa).

The tract at residues 86–148 is disordered; it reads HVGRWANRHS…RRRKSARGNG (63 aa). Composition is skewed to low complexity over residues 95 to 120 and 127 to 136; these read SNVSSSSGSRGRSSVSSRDSSPSYSG and RSISSSPSTI. Serine 130 and serine 132 each carry phosphoserine. Position 135 is a phosphothreonine (threonine 135). Residues 182–272 form the SWIRM domain; the sequence is LKAEWKGPPL…AFHEVGFFDD (91 aa).

Component of the RPD3C(L) complex.

It localises to the nucleus. Component of the RPD3C(L) histone deacetylase complex (HDAC) responsible for the deacetylation of lysine residues on the N-terminal part of the core histones (H2A, H2B, H3 and H4). Histone deacetylation gives a tag for epigenetic repression and plays an important role in transcriptional regulation, cell cycle progression and developmental events. This is SWIRM domain-containing protein laf2 (laf2) from Schizosaccharomyces pombe (strain 972 / ATCC 24843) (Fission yeast).